We begin with the raw amino-acid sequence, 189 residues long: S-protein homolog 26 (189 aa).

The N-terminal stretch at Met-1–Ala-25 is a signal peptide.

Belongs to the plant self-incompatibility (S1) protein family.

Its subcellular location is the secreted. The polypeptide is S-protein homolog 26 (Arabidopsis thaliana (Mouse-ear cress)).